Consider the following 310-residue polypeptide: MTNPAETARPERQRKPDWIRVKAPTSKGYGETRALMRELGLNTVCEEAACPNIGECWTKKHATVMILGDVCTRACAFCNVKTGMPRAVDPMEPINVATAAAKMGLEHIVITSVDRDDLPDGGAGHFVKVIKALRELTPNTTIEILTPDFRNKMEAAVESIVEAGPDVYNHNLETVPRLYPTIRPGARYYASLRLLEQVKRHDPRIFTKSGVMLGLGEERLEVHQVMDDMRSAQIDFLTMGQYLQPTPKHAKVIEFVTPKAFDAYGSIARAKGFLQVAASPLTRSSYHAGEDFRQMRQAREAQLAKAAQKA.

[4Fe-4S] cluster contacts are provided by cysteine 45, cysteine 50, cysteine 56, cysteine 71, cysteine 75, cysteine 78, and serine 285. Positions 57-274 constitute a Radical SAM core domain; the sequence is WTKKHATVMI…GSIARAKGFL (218 aa).

The protein belongs to the radical SAM superfamily. Lipoyl synthase family. The cofactor is [4Fe-4S] cluster.

Its subcellular location is the cytoplasm. The catalysed reaction is [[Fe-S] cluster scaffold protein carrying a second [4Fe-4S](2+) cluster] + N(6)-octanoyl-L-lysyl-[protein] + 2 oxidized [2Fe-2S]-[ferredoxin] + 2 S-adenosyl-L-methionine + 4 H(+) = [[Fe-S] cluster scaffold protein] + N(6)-[(R)-dihydrolipoyl]-L-lysyl-[protein] + 4 Fe(3+) + 2 hydrogen sulfide + 2 5'-deoxyadenosine + 2 L-methionine + 2 reduced [2Fe-2S]-[ferredoxin]. It functions in the pathway protein modification; protein lipoylation via endogenous pathway; protein N(6)-(lipoyl)lysine from octanoyl-[acyl-carrier-protein]: step 2/2. Functionally, catalyzes the radical-mediated insertion of two sulfur atoms into the C-6 and C-8 positions of the octanoyl moiety bound to the lipoyl domains of lipoate-dependent enzymes, thereby converting the octanoylated domains into lipoylated derivatives. In Novosphingobium aromaticivorans (strain ATCC 700278 / DSM 12444 / CCUG 56034 / CIP 105152 / NBRC 16084 / F199), this protein is Lipoyl synthase.